The primary structure comprises 264 residues: Origin recognition complex subunit 6 (264 aa).

Belongs to the ORC6 family. ORC is composed of six subunits. ORC interacts with cdc18, recruiting it to the ars1 origin of replication.

It is found in the nucleus. Component of the origin recognition complex (ORC) that binds origins of replication. It has a role in both chromosomal replication and mating type transcriptional silencing. ORC binds to multiple sites within the ars1 origin of DNA replication in an ATP-independent manner. This chain is Origin recognition complex subunit 6 (orc6), found in Schizosaccharomyces pombe (strain 972 / ATCC 24843) (Fission yeast).